We begin with the raw amino-acid sequence, 256 residues long: Ribosomal RNA large subunit methyltransferase E (256 aa).

Positions 50, 52, 69, 85, and 108 each coordinate S-adenosyl-L-methionine. Lys148 (proton acceptor) is an active-site residue. In terms of domain architecture, TRAM spans 195–253 (SLRKGDVVDVTIDAMGKTGDGIAHVDDFVVFVKGGSVGDKLKIKITDVKPSFAFADIVE).

Belongs to the class I-like SAM-binding methyltransferase superfamily. RNA methyltransferase RlmE family.

It localises to the cytoplasm. The catalysed reaction is uridine(2552) in 23S rRNA + S-adenosyl-L-methionine = 2'-O-methyluridine(2552) in 23S rRNA + S-adenosyl-L-homocysteine + H(+). Functionally, specifically methylates the uridine in position 2552 of 23S rRNA at the 2'-O position of the ribose in the fully assembled 50S ribosomal subunit. The sequence is that of Ribosomal RNA large subunit methyltransferase E from Methanocella arvoryzae (strain DSM 22066 / NBRC 105507 / MRE50).